A 213-amino-acid polypeptide reads, in one-letter code: ATP phosphoribosyltransferase (213 aa).

This sequence belongs to the ATP phosphoribosyltransferase family. Short subfamily. In terms of assembly, heteromultimer composed of HisG and HisZ subunits.

It is found in the cytoplasm. It catalyses the reaction 1-(5-phospho-beta-D-ribosyl)-ATP + diphosphate = 5-phospho-alpha-D-ribose 1-diphosphate + ATP. It participates in amino-acid biosynthesis; L-histidine biosynthesis; L-histidine from 5-phospho-alpha-D-ribose 1-diphosphate: step 1/9. Its function is as follows. Catalyzes the condensation of ATP and 5-phosphoribose 1-diphosphate to form N'-(5'-phosphoribosyl)-ATP (PR-ATP). Has a crucial role in the pathway because the rate of histidine biosynthesis seems to be controlled primarily by regulation of HisG enzymatic activity. The chain is ATP phosphoribosyltransferase from Chromobacterium violaceum (strain ATCC 12472 / DSM 30191 / JCM 1249 / CCUG 213 / NBRC 12614 / NCIMB 9131 / NCTC 9757 / MK).